A 447-amino-acid chain; its full sequence is Phosphoglucosamine mutase (447 aa).

The active-site Phosphoserine intermediate is Ser102. Mg(2+)-binding residues include Ser102, Asp241, Asp243, and Asp245. Ser102 is modified (phosphoserine).

This sequence belongs to the phosphohexose mutase family. Mg(2+) is required as a cofactor. Post-translationally, activated by phosphorylation.

The enzyme catalyses alpha-D-glucosamine 1-phosphate = D-glucosamine 6-phosphate. Catalyzes the conversion of glucosamine-6-phosphate to glucosamine-1-phosphate. This Delftia acidovorans (strain DSM 14801 / SPH-1) protein is Phosphoglucosamine mutase.